The chain runs to 287 residues: ATP synthase gamma chain (287 aa).

Belongs to the ATPase gamma chain family. In terms of assembly, F-type ATPases have 2 components, CF(1) - the catalytic core - and CF(0) - the membrane proton channel. CF(1) has five subunits: alpha(3), beta(3), gamma(1), delta(1), epsilon(1). CF(0) has three main subunits: a, b and c.

It localises to the cell inner membrane. Functionally, produces ATP from ADP in the presence of a proton gradient across the membrane. The gamma chain is believed to be important in regulating ATPase activity and the flow of protons through the CF(0) complex. In Edwardsiella ictaluri (strain 93-146), this protein is ATP synthase gamma chain.